Consider the following 710-residue polypeptide: Choline transporter-like protein 5 (710 aa).

The disordered stretch occupies residues 1 to 21 (MARKRKPPSSQGDPRRYDPDF). The Cytoplasmic segment spans residues 1 to 32 (MARKRKPPSSQGDPRRYDPDFQGPTAKRTCTD). A helical membrane pass occupies residues 33–53 (VLCCLIFLLFILGYVLLGLLA). Topologically, residues 54-236 (WAHGDPRKMA…KLLEDYATSW (183 aa)) are extracellular. N-linked (GlcNAc...) asparagine glycosylation is found at Asn82 and Asn184. A helical transmembrane segment spans residues 237–257 (KWILIGLTVAMALSWTFLILL). Residues 258–260 (RFT) lie on the Cytoplasmic side of the membrane. Residues 261–281 (AGFLFWFFIFGVLGIIGYGIW) traverse the membrane as a helical segment. The Extracellular segment spans residues 282 to 319 (YCFLEYSSIQQRPQSTFWMYGFGIQRRVNMFFHLKETW). Residues 320-340 (FSMMIILSAIEIIIIIVLIFL) traverse the membrane as a helical segment. The Cytoplasmic portion of the chain corresponds to 341-345 (RTRIQ). The chain crosses the membrane as a helical span at residues 346 to 366 (VAIILLQEGSKAISYLPSALI). The Extracellular segment spans residues 367–368 (YP). A helical transmembrane segment spans residues 369–389 (VLTFILLSICISYWAVTAVFL). The Cytoplasmic portion of the chain corresponds to 390-454 (ATSGVPIFKV…NYILTFQVYN (65 aa)). A helical transmembrane segment spans residues 455–475 (LFAFLWLINFVIALGQCALAG). The Extracellular segment spans residues 476–509 (AFASYYWAMKKPDDIPPYPLFTAFGRAVRYHTGS). A helical transmembrane segment spans residues 510 to 530 (LAFGSLILASVQMFKVIVEYL). The Cytoplasmic segment spans residues 531–604 (DRRLKKAQNS…KVTVTDEVTY (74 aa)). A helical transmembrane segment spans residues 605 to 625 (FVLLLGKVLVSGIVGVLAFLL). Topologically, residues 626-643 (FTERLQIIVDGPTTLNYY) are extracellular. Residues 644-664 (WVPFLTLVFGSYMIAHGFFSV) form a helical membrane-spanning segment. The Cytoplasmic portion of the chain corresponds to 665-710 (YSMCVETIFICFLEDLERNEGSPSRPYFVTPALMNILLEQGKIKKQ).

The protein belongs to the CTL (choline transporter-like) family.

It is found in the cell membrane. The catalysed reaction is choline(out) + n H(+)(in) = choline(in) + n H(+)(out). Its function is as follows. Choline/H+ antiporter. The polypeptide is Choline transporter-like protein 5 (Slc44a5) (Mus musculus (Mouse)).